A 259-amino-acid polypeptide reads, in one-letter code: HTH-type quorum sensing-dependent transcriptional regulator VjbR (259 aa).

The segment at 76–179 (KNYFAIDPVF…AGIIHGTVCG (104 aa)) is C12-HSL binding. In terms of domain architecture, HTH luxR-type spans 183-248 (ANSVASLLTP…SAVATALSLG (66 aa)). Residues 207-226 (DGEIAEILSIARWTVVTYLQ) constitute a DNA-binding region (H-T-H motif).

Transcriptional regulator involved in the global control of Brucella gene expression. Mediates the effects of the quorum sensing autoinducer C12-HSL (N-dodecanoyl-homoserine lactone) on a large and diverse number of genes. The polypeptide is HTH-type quorum sensing-dependent transcriptional regulator VjbR (vjbR) (Brucella ovis (strain ATCC 25840 / 63/290 / NCTC 10512)).